Reading from the N-terminus, the 98-residue chain is Aspartyl/glutamyl-tRNA(Asn/Gln) amidotransferase subunit C (98 aa).

It belongs to the GatC family. Heterotrimer of A, B and C subunits.

The enzyme catalyses L-glutamyl-tRNA(Gln) + L-glutamine + ATP + H2O = L-glutaminyl-tRNA(Gln) + L-glutamate + ADP + phosphate + H(+). It catalyses the reaction L-aspartyl-tRNA(Asn) + L-glutamine + ATP + H2O = L-asparaginyl-tRNA(Asn) + L-glutamate + ADP + phosphate + 2 H(+). In terms of biological role, allows the formation of correctly charged Asn-tRNA(Asn) or Gln-tRNA(Gln) through the transamidation of misacylated Asp-tRNA(Asn) or Glu-tRNA(Gln) in organisms which lack either or both of asparaginyl-tRNA or glutaminyl-tRNA synthetases. The reaction takes place in the presence of glutamine and ATP through an activated phospho-Asp-tRNA(Asn) or phospho-Glu-tRNA(Gln). The sequence is that of Aspartyl/glutamyl-tRNA(Asn/Gln) amidotransferase subunit C from Paenarthrobacter aurescens (strain TC1).